A 77-amino-acid polypeptide reads, in one-letter code: Protein RADIALIS-like 4 (77 aa).

The region spanning 6-61 (MSTSSWTAREDKQFEMALAKFDKDTPDRWQKIARAVGGKSTEEVKRHYELLLRDVN) is the SANT domain.

In terms of tissue distribution, expressed just outside the vascular bundles in the rosette stem and the leaf traces. Not detected in floral primordia.

The protein resides in the nucleus. In terms of biological role, probable transcription factor. In Arabidopsis thaliana (Mouse-ear cress), this protein is Protein RADIALIS-like 4 (RL4).